The chain runs to 561 residues: Urocanate hydratase (561 aa).

NAD(+) is bound by residues G52–G53, Q130, G176–G178, E196, R201, N242–A243, Q263–H267, Y273–L274, and Y322. Residue C410 is part of the active site. G492 is a binding site for NAD(+).

This sequence belongs to the urocanase family. NAD(+) is required as a cofactor.

It localises to the cytoplasm. The catalysed reaction is 4-imidazolone-5-propanoate = trans-urocanate + H2O. The protein operates within amino-acid degradation; L-histidine degradation into L-glutamate; N-formimidoyl-L-glutamate from L-histidine: step 2/3. Functionally, catalyzes the conversion of urocanate to 4-imidazolone-5-propionate. The protein is Urocanate hydratase of Salmonella choleraesuis (strain SC-B67).